The primary structure comprises 222 residues: Orotidine 5'-phosphate decarboxylase (222 aa).

Residues D11, K30, 59 to 68, S115, 164 to 174, G187, and R188 each bind substrate; these read DFKLADIGYI and PGMGSQGGSYG. Catalysis depends on K61, which acts as the Proton donor.

The protein belongs to the OMP decarboxylase family. Type 1 subfamily. Homodimer.

The enzyme catalyses orotidine 5'-phosphate + H(+) = UMP + CO2. It participates in pyrimidine metabolism; UMP biosynthesis via de novo pathway; UMP from orotate: step 2/2. Its function is as follows. Catalyzes the decarboxylation of orotidine 5'-monophosphate (OMP) to uridine 5'-monophosphate (UMP). The polypeptide is Orotidine 5'-phosphate decarboxylase (Saccharolobus solfataricus (strain ATCC 35092 / DSM 1617 / JCM 11322 / P2) (Sulfolobus solfataricus)).